Reading from the N-terminus, the 221-residue chain is Uracil-DNA glycosylase 1 (221 aa).

Aspartate 61 acts as the Proton acceptor in catalysis.

This sequence belongs to the uracil-DNA glycosylase (UDG) superfamily. UNG family.

The protein resides in the cytoplasm. It carries out the reaction Hydrolyzes single-stranded DNA or mismatched double-stranded DNA and polynucleotides, releasing free uracil.. In terms of biological role, excises uracil residues from the DNA which can arise as a result of misincorporation of dUMP residues by DNA polymerase or due to deamination of cytosine. This chain is Uracil-DNA glycosylase 1, found in Listeria innocua serovar 6a (strain ATCC BAA-680 / CLIP 11262).